A 447-amino-acid chain; its full sequence is Clusterin (447 aa).

Positions 1–21 (MKILLLCVALLLTWDNGMVLG) are cleaved as a signal peptide. The short motif at 77–80 (KKKK) is the Nuclear localization signal element. Cystine bridges form between cysteine 101–cysteine 312, cysteine 112–cysteine 304, cysteine 115–cysteine 301, cysteine 120–cysteine 294, and cysteine 128–cysteine 284. Asparagine 102 is a glycosylation site (N-linked (GlcNAc...) asparagine). Serine 132 carries the post-translational modification Phosphoserine. Asparagine 144, asparagine 290, asparagine 327, asparagine 353, and asparagine 373 each carry an N-linked (GlcNAc...) asparagine glycan. Serine 394 is subject to Phosphoserine. A Nuclear localization signal motif is present at residues 441–445 (RRKSR).

The protein belongs to the clusterin family. In terms of assembly, antiparallel disulfide-linked heterodimer of an alpha chain and a beta chain. Self-associates and forms higher oligomers. Interacts with a broad range of misfolded proteins, including APP, APOC2 and LYZ. Slightly acidic pH promotes interaction with misfolded proteins. Forms high-molecular weight oligomers upon interaction with misfolded proteins. Interacts with APOA1, LRP2, CLUAP1 and PON1. Interacts with the complement membrane attack complex. Interacts (via alpha chain) with XRCC6. Interacts with SYVN1, COMMD1, BTRC, CUL1 and with ubiquitin and SCF (SKP1-CUL1-F-box protein) E3 ubiquitin-protein ligase complexes. Interacts (via alpha chain) with BAX in stressed cells, where BAX undergoes a conformation change leading to association with the mitochondrial membrane. Does not interact with BAX in unstressed cells. Found in a complex with LTF, CLU, EPPIN and SEMG1. Interacts (immaturely glycosylated pre-secreted form) with HSPA5; this interaction promotes CLU stability and facilitates stress-induced CLU retrotranslocation from the secretory pathway to the mitochondria, thereby reducing stress-induced apoptosis by stabilizing mitochondrial membrane integrity. Interacts with BCL2L1; this interaction releases and activates BAX and promotes cell death. Interacts with TGFBR2 and ACVR1. Interacts (secreted form) with STMN3; this interaction may act as an important modulator during neuronal differentiation. Interacts with VLDLR and LRP8. Post-translationally, proteolytically cleaved on its way through the secretory system, probably within the Golgi lumen. Proteolytic cleavage is not necessary for its chaperone activity. All non-secreted forms are not proteolytically cleaved. Chaperone activity of uncleaved forms is dependent on a non-reducing environment. In terms of processing, polyubiquitinated, leading to proteasomal degradation. Under cellular stress, the intracellular level of cleaved form is reduced due to proteasomal degradation. Extensively glycosylated with sulfated N-linked carbohydrates. About 30% of the protein mass is comprised of complex N-linked carbohydrate. Endoplasmic reticulum (ER) stress induces changes in glycosylation status and increases level of hypoglycosylated forms. Core carbohydrates are essential for chaperone activity. Non-secreted forms are hypoglycosylated or unglycosylated. Detected in Sertoli cells (at protein level). Detected in cultured Sertoli cells, testis, epididymis, liver and brain.

The protein resides in the secreted. Its subcellular location is the nucleus. The protein localises to the cytoplasm. It is found in the mitochondrion membrane. It localises to the cytosol. The protein resides in the microsome. Its subcellular location is the endoplasmic reticulum. The protein localises to the mitochondrion. It is found in the perinuclear region. It localises to the cytoplasmic vesicle. The protein resides in the secretory vesicle. Its subcellular location is the chromaffin granule. Functionally, functions as extracellular chaperone that prevents aggregation of non native proteins. Prevents stress-induced aggregation of blood plasma proteins. Inhibits formation of amyloid fibrils by APP, APOC2, B2M, CALCA, CSN3, SNCA and aggregation-prone LYZ variants (in vitro). Does not require ATP. Maintains partially unfolded proteins in a state appropriate for subsequent refolding by other chaperones, such as HSPA8/HSC70. Does not refold proteins by itself. Binding to cell surface receptors triggers internalization of the chaperone-client complex and subsequent lysosomal or proteasomal degradation. When secreted, protects cells against apoptosis and against cytolysis by complement: inhibits assembly of the complement membrane attack complex (MAC) by preventing polymerization of C9 pore component of the MAC complex. Intracellular forms interact with ubiquitin and SCF (SKP1-CUL1-F-box protein) E3 ubiquitin-protein ligase complexes and promote the ubiquitination and subsequent proteasomal degradation of target proteins. Promotes proteasomal degradation of COMMD1 and IKBKB. Modulates NF-kappa-B transcriptional activity. Following stress, promotes apoptosis. Inhibits apoptosis when associated with the mitochondrial membrane by interference with BAX-dependent release of cytochrome c into the cytoplasm. Plays a role in the regulation of cell proliferation. An intracellular form suppresses stress-induced apoptosis by stabilizing mitochondrial membrane integrity through interaction with HSPA5. Secreted form does not affect caspase or BAX-mediated intrinsic apoptosis and TNF-induced NF-kappa-B-activity. Secreted form act as an important modulator during neuronal differentiation through interaction with STMN3. Plays a role in the clearance of immune complexes that arise during cell injury. In Rattus norvegicus (Rat), this protein is Clusterin.